The primary structure comprises 248 residues: Probable transcriptional regulatory protein Mchl_0946 (248 aa).

This sequence belongs to the TACO1 family.

The protein resides in the cytoplasm. This chain is Probable transcriptional regulatory protein Mchl_0946, found in Methylorubrum extorquens (strain CM4 / NCIMB 13688) (Methylobacterium extorquens).